A 580-amino-acid polypeptide reads, in one-letter code: Cytochrome P450 monooxygenase helB1 (580 aa).

Residues 1-32 form a disordered region; the sequence is MRTYAIRPVSNRLPGPIEPKKHRRDRDNSTTG. N-linked (GlcNAc...) asparagine glycosylation occurs at asparagine 28. A helical transmembrane segment spans residues 61–81; that stretch reads FLNTISVLQVLAAIFIGALTY. Cysteine 497 contacts heme.

Belongs to the cytochrome P450 family. Heme serves as cofactor.

The protein localises to the membrane. It functions in the pathway mycotoxin biosynthesis. Functionally, cytochrome P450 monooxygenase; part of the gene cluster that mediates the biosynthesis of helvolic acid, an antibacterial nortriterpenoid. Protostadienol synthase helA cyclizes (3S)-oxidosqualene to (17Z)-protosta-17(20),24-dien-3-beta-ol (protostadienol). The synthesis of protostadienol is followed by several steps of monooxygenation, dehydrogenation, and acyl transfer to yield the final helvolic acid. Following the cyclization to the tetracyclic protostadienol by helA, cytochrome P450 monooxygenases helB1-mediated and helB2-mediated oxidation at C-4 and C-16, acyltransferase helD2-dependent acetylation of 16-OH, oxidation of C-21 by cytochrome P450 monooxygenase helB4, and short chain dehydrogenase helC-dependent oxidative decarboxylation yield the fusidane skeleton. This intermediate is further modified in three additional steps mediated by the cytochrome P450 monooxygenase helB3, the acyltransferase helD1, and the 3-ketosteroid 1-dehydrogenase helE to give helvolic acid. Compared with the late stages in the biosynthesis of helvolic acid, enzymes involved in the early stage modifications act in a relatively strict order. The hydroxylation of C-16 by helB1 and subsequent acetylation by helD2 should occur before the helB3-mediated oxidation of C-21. C-4 demethylation in fusidane-type antibiotics proceeds in an unusual manner though it is also achieved by oxidative decarboxylation. The methyl group at C-4 beta position is oxidized by helB1 and subsequently removed by the short chain dehydrogenase helC. The protein is Cytochrome P450 monooxygenase helB1 of Aspergillus fumigatus (strain ATCC MYA-4609 / CBS 101355 / FGSC A1100 / Af293) (Neosartorya fumigata).